The chain runs to 368 residues: MYDWFSEMRKKDPVYYDGNIWQVFSYRYTKEVLNNFSKFSSDLTGYHERLEDLRNGKIRFDIPTRYTMLTSDPPLHDELRSMSADIFSPQKLQTLETFIRETTRSLLDSIDPREDDIVKKLAVPLPIIVISKILGLPIEDKEKFKEWSDLVAFRLGKPGEIFELGKKYLELIGYVKDHLNSGTEVVSRVVNSNLSDIEKLGYIILLLIAGNETTTNLISNSVIDFTRFNLWQRIREENLYLKAIEEALRYSPPVMRTVRKTKERVKLGDQTIEEGEYVRVWIASANRDEEVFHDGEKFIPDRNPNPHLSFGSGIHLCLGAPLARLEARIAIEEFSKRFRHIEILDTEKVPNEVLNGYKRLVVRLKSNE.

Positions 76, 80, 257, 259, 315, and 317 each coordinate heme.

The protein belongs to the cytochrome P450 family. The cofactor is heme.

It is found in the cytoplasm. The enzyme catalyses 2 a phenolic donor + H2O2 = 2 a phenolic radical donor + 2 H2O. In terms of biological role, the endogenous substrate is not known. In vitro, catalyzes the H(2)O(2)-dependent epoxidation of styrene, cis-beta-methylstyrene, and cis-stilbene with retention of stereochemistry. Is able to use cumene hydroperoxide (CHP) or tert-butyl hydroperoxide (TBHP) instead of H(2)O(2) as the electron acceptor. Can also hydroxylate fatty acids such as lauric acid. This Sulfolobus acidocaldarius (strain ATCC 33909 / DSM 639 / JCM 8929 / NBRC 15157 / NCIMB 11770) protein is Cytochrome P450 119 (cyp119).